The following is a 393-amino-acid chain: Heparan sulfate glucosamine 3-O-sulfotransferase 3A1 (393 aa).

Residues 1–24 are Cytoplasmic-facing; that stretch reads MAPSGPTGAQPSPAEPLSRSIFRK. A helical; Signal-anchor for type II membrane protein transmembrane segment spans residues 25-43; it reads FLLMLCSLLTSLYVFYCLA. At 44 to 393 the chain is on the lumenal side; sequence ERCPPGSGPV…MTGRDFGWDG (350 aa). Residues 85–121 are disordered; the sequence is QRRRRGRSGPGDSSDQEEQSPGLAAAPGGSGAGSSVA. 149 to 153 provides a ligand contact to 3'-phosphoadenylyl sulfate; the sequence is KGGTR. Substrate is bound by residues 171–177 and 202–205; these read EPHFFDR and KTPS. Residues Arg-230 and Ser-238 each contribute to the 3'-phosphoadenylyl sulfate site. Residue Asn-260 is glycosylated (N-linked (GlcNAc...) asparagine). Position 270–271 (270–271) interacts with substrate; sequence WS. An N-linked (GlcNAc...) asparagine glycan is attached at Asn-331. An intrachain disulfide couples Cys-338 to Cys-350. 3'-phosphoadenylyl sulfate is bound at residue 355–359; the sequence is KGRAH.

The protein belongs to the sulfotransferase 1 family.

Its subcellular location is the golgi apparatus membrane. It carries out the reaction alpha-D-glucosaminyl-[heparan sulfate](n) + 3'-phosphoadenylyl sulfate = 3-sulfo-alpha-D-glucosaminyl-[heparan sulfate](n) + adenosine 3',5'-bisphosphate + H(+). In terms of biological role, sulfotransferase that utilizes 3'-phospho-5'-adenylyl sulfate (PAPS) to catalyze the transfer of a sulfo group to an N-unsubstituted glucosamine linked to a 2-O-sulfo iduronic acid unit on heparan sulfate. Catalyzes the O-sulfation of glucosamine in IdoUA2S-GlcNS and also in IdoUA2S-GlcNH2. Unlike HS3ST1/3-OST-1, does not convert non-anticoagulant heparan sulfate to anticoagulant heparan sulfate. The polypeptide is Heparan sulfate glucosamine 3-O-sulfotransferase 3A1 (Hs3st3a1) (Mus musculus (Mouse)).